Here is a 238-residue protein sequence, read N- to C-terminus: tRNA (guanine-N(1)-)-methyltransferase (238 aa).

Residues Gly-110 and 129-134 (LGDFIL) contribute to the S-adenosyl-L-methionine site.

Belongs to the RNA methyltransferase TrmD family. Homodimer.

It is found in the cytoplasm. The enzyme catalyses guanosine(37) in tRNA + S-adenosyl-L-methionine = N(1)-methylguanosine(37) in tRNA + S-adenosyl-L-homocysteine + H(+). Its function is as follows. Specifically methylates guanosine-37 in various tRNAs. This chain is tRNA (guanine-N(1)-)-methyltransferase, found in Clostridium botulinum (strain Alaska E43 / Type E3).